The following is a 64-amino-acid chain: Large ribosomal subunit protein uL29 (64 aa).

The protein belongs to the universal ribosomal protein uL29 family.

The chain is Large ribosomal subunit protein uL29 from Ligilactobacillus salivarius (strain UCC118) (Lactobacillus salivarius).